The primary structure comprises 209 residues: Glutathione S-transferase F7 (209 aa).

One can recognise a GST N-terminal domain in the interval 2-83; sequence AGIKVFGHPA…YIAHFYSDKG (82 aa). Glutathione is bound by residues 12–13, 41–42, 54–55, and 67–68; these read ST, HK, KV, and ES. A GST C-terminal domain is found at 90–209; it reads GSKDIAGIAM…TSRPSAKKVL (120 aa).

Belongs to the GST superfamily. Phi family.

The protein localises to the cytoplasm. It is found in the cytosol. The enzyme catalyses RX + glutathione = an S-substituted glutathione + a halide anion + H(+). May be involved in the conjugation of reduced glutathione to a wide number of exogenous and endogenous hydrophobic electrophiles and have a detoxification role against certain herbicides. The polypeptide is Glutathione S-transferase F7 (Arabidopsis thaliana (Mouse-ear cress)).